Consider the following 165-residue polypeptide: Large ribosomal subunit protein uL10 (165 aa).

Belongs to the universal ribosomal protein uL10 family. Part of the ribosomal stalk of the 50S ribosomal subunit. The N-terminus interacts with L11 and the large rRNA to form the base of the stalk. The C-terminus forms an elongated spine to which L12 dimers bind in a sequential fashion forming a multimeric L10(L12)X complex.

Functionally, forms part of the ribosomal stalk, playing a central role in the interaction of the ribosome with GTP-bound translation factors. In Paraburkholderia phymatum (strain DSM 17167 / CIP 108236 / LMG 21445 / STM815) (Burkholderia phymatum), this protein is Large ribosomal subunit protein uL10.